Reading from the N-terminus, the 146-residue chain is UPF0260 protein SO_2573 (146 aa).

The protein belongs to the UPF0260 family.

The polypeptide is UPF0260 protein SO_2573 (Shewanella oneidensis (strain ATCC 700550 / JCM 31522 / CIP 106686 / LMG 19005 / NCIMB 14063 / MR-1)).